Here is a 208-residue protein sequence, read N- to C-terminus: Ribosomal RNA large subunit methyltransferase E (208 aa).

Residues Gly62, Trp64, Asp82, Asp98, and Asp123 each coordinate S-adenosyl-L-methionine. Lys163 functions as the Proton acceptor in the catalytic mechanism.

The protein belongs to the class I-like SAM-binding methyltransferase superfamily. RNA methyltransferase RlmE family.

It localises to the cytoplasm. It catalyses the reaction uridine(2552) in 23S rRNA + S-adenosyl-L-methionine = 2'-O-methyluridine(2552) in 23S rRNA + S-adenosyl-L-homocysteine + H(+). Specifically methylates the uridine in position 2552 of 23S rRNA at the 2'-O position of the ribose in the fully assembled 50S ribosomal subunit. This Actinobacillus succinogenes (strain ATCC 55618 / DSM 22257 / CCUG 43843 / 130Z) protein is Ribosomal RNA large subunit methyltransferase E.